A 326-amino-acid chain; its full sequence is 4-hydroxy-3-methylbut-2-enyl diphosphate reductase 1 (326 aa).

Position 27 (C27) interacts with [4Fe-4S] cluster. H56 and H89 together coordinate (2E)-4-hydroxy-3-methylbut-2-enyl diphosphate. Residues H56 and H89 each coordinate dimethylallyl diphosphate. Positions 56 and 89 each coordinate isopentenyl diphosphate. C111 is a [4Fe-4S] cluster binding site. H139 contributes to the (2E)-4-hydroxy-3-methylbut-2-enyl diphosphate binding site. H139 is a dimethylallyl diphosphate binding site. H139 is a binding site for isopentenyl diphosphate. Catalysis depends on E141, which acts as the Proton donor. T179 provides a ligand contact to (2E)-4-hydroxy-3-methylbut-2-enyl diphosphate. C209 contributes to the [4Fe-4S] cluster binding site. 4 residues coordinate (2E)-4-hydroxy-3-methylbut-2-enyl diphosphate: S237, S238, N239, and S281. 4 residues coordinate dimethylallyl diphosphate: S237, S238, N239, and S281. Positions 237, 238, 239, and 281 each coordinate isopentenyl diphosphate.

The protein belongs to the IspH family. Requires [4Fe-4S] cluster as cofactor.

The catalysed reaction is isopentenyl diphosphate + 2 oxidized [2Fe-2S]-[ferredoxin] + H2O = (2E)-4-hydroxy-3-methylbut-2-enyl diphosphate + 2 reduced [2Fe-2S]-[ferredoxin] + 2 H(+). It carries out the reaction dimethylallyl diphosphate + 2 oxidized [2Fe-2S]-[ferredoxin] + H2O = (2E)-4-hydroxy-3-methylbut-2-enyl diphosphate + 2 reduced [2Fe-2S]-[ferredoxin] + 2 H(+). It participates in isoprenoid biosynthesis; dimethylallyl diphosphate biosynthesis; dimethylallyl diphosphate from (2E)-4-hydroxy-3-methylbutenyl diphosphate: step 1/1. Its pathway is isoprenoid biosynthesis; isopentenyl diphosphate biosynthesis via DXP pathway; isopentenyl diphosphate from 1-deoxy-D-xylulose 5-phosphate: step 6/6. Functionally, catalyzes the conversion of 1-hydroxy-2-methyl-2-(E)-butenyl 4-diphosphate (HMBPP) into a mixture of isopentenyl diphosphate (IPP) and dimethylallyl diphosphate (DMAPP). Acts in the terminal step of the DOXP/MEP pathway for isoprenoid precursor biosynthesis. The polypeptide is 4-hydroxy-3-methylbut-2-enyl diphosphate reductase 1 (Burkholderia pseudomallei (strain K96243)).